We begin with the raw amino-acid sequence, 67 residues long: SPbeta prophage-derived uncharacterized protein YoqF (67 aa).

The protein is SPbeta prophage-derived uncharacterized protein YoqF (yoqF) of Bacillus subtilis (strain 168).